The sequence spans 158 residues: Large ribosomal subunit protein bL17 (158 aa).

Residues 119–158 (APAAAPEAEEKGEKKAAKAPKAEKAPKAEKKPAKKAAKAE) are disordered. Residues 126 to 158 (AEEKGEKKAAKAPKAEKAPKAEKKPAKKAAKAE) show a composition bias toward basic and acidic residues.

The protein belongs to the bacterial ribosomal protein bL17 family. In terms of assembly, part of the 50S ribosomal subunit. Contacts protein L32.

In Anaeromyxobacter sp. (strain K), this protein is Large ribosomal subunit protein bL17.